The sequence spans 352 residues: DNA polymerase IV (352 aa).

The UmuC domain maps to 6-186; sequence IIHIDMDAFY…LPLGKIPGAG (181 aa). Mg(2+)-binding residues include D10 and D104. The active site involves E105.

Belongs to the DNA polymerase type-Y family. In terms of assembly, monomer. Mg(2+) is required as a cofactor.

The protein localises to the cytoplasm. It carries out the reaction DNA(n) + a 2'-deoxyribonucleoside 5'-triphosphate = DNA(n+1) + diphosphate. Its function is as follows. Poorly processive, error-prone DNA polymerase involved in untargeted mutagenesis. Copies undamaged DNA at stalled replication forks, which arise in vivo from mismatched or misaligned primer ends. These misaligned primers can be extended by PolIV. Exhibits no 3'-5' exonuclease (proofreading) activity. May be involved in translesional synthesis, in conjunction with the beta clamp from PolIII. The protein is DNA polymerase IV of Neisseria gonorrhoeae (strain ATCC 700825 / FA 1090).